Here is a 278-residue protein sequence, read N- to C-terminus: Nucleotide-binding protein LHK_02029 (278 aa).

Residue Gly8–Ser15 coordinates ATP. Asp57 to Asp60 is a binding site for GTP.

It belongs to the RapZ-like family.

Functionally, displays ATPase and GTPase activities. This chain is Nucleotide-binding protein LHK_02029, found in Laribacter hongkongensis (strain HLHK9).